A 775-amino-acid polypeptide reads, in one-letter code: tRNA(Met) cytidine acetyltransferase TmcA (775 aa).

2 disordered regions span residues 1–33 and 191–215; these read MPTT…GMDI and TVEQ…PTDA. The span at 199-212 shows a compositional bias: pro residues; that stretch reads DPPPSRPVPSPTPP. Residues Gln-230, 254–263, and Arg-403 each bind ATP; that span reads GRGKSSAAGL. Positions 438–623 constitute an N-acetyltransferase domain; it reads VEYRQLSAAD…YSVVMLDPCS (186 aa). Acetyl-CoA is bound by residues 549–551, 556–562, and Glu-588; these read IAT and RSRGLGS.

It belongs to the RNA cytidine acetyltransferase family. TmcA subfamily.

The protein localises to the cytoplasm. The enzyme catalyses cytidine(34) in elongator tRNA(Met) + acetyl-CoA + ATP + H2O = N(4)-acetylcytidine(34) in elongator tRNA(Met) + ADP + phosphate + CoA + H(+). Functionally, catalyzes the formation of N(4)-acetylcytidine (ac(4)C) at the wobble position of tRNA(Met), by using acetyl-CoA as an acetyl donor and ATP (or GTP). The sequence is that of tRNA(Met) cytidine acetyltransferase TmcA from Haloarcula marismortui (strain ATCC 43049 / DSM 3752 / JCM 8966 / VKM B-1809) (Halobacterium marismortui).